Here is a 242-residue protein sequence, read N- to C-terminus: uncharacterized protein (242 aa).

An S4 RNA-binding domain is found at 2-69; that stretch reads YRLAKIISNA…KPRLWIYYKP (68 aa). Residue aspartate 102 is the Nucleophile of the active site.

Belongs to the pseudouridine synthase RsuA family.

It carries out the reaction a uridine in RNA = a pseudouridine in RNA. This is an uncharacterized protein from Rickettsia typhi (strain ATCC VR-144 / Wilmington).